Consider the following 116-residue polypeptide: MRHRCRVPRLGKPADQRKALLRALTTELIRHGRITTTKVRAKAVRSEVDRMITLAKDGSLAARRQALGYLYDPQLVGALFEQASARYGQRQGGYTRIIRTIPRRGDNAEMAIIELV.

The protein belongs to the bacterial ribosomal protein bL17 family. As to quaternary structure, part of the 50S ribosomal subunit. Contacts protein L32.

The polypeptide is Large ribosomal subunit protein bL17 (Cyanothece sp. (strain PCC 7425 / ATCC 29141)).